A 108-amino-acid polypeptide reads, in one-letter code: MNEIFKELEGDCMGENVQLKDVIFNDSKYSKTKKVLAIMFITFVFLLQVNGTDKMIGFIFVFTGTVIGVTYSVCKLLFYNTKRYIKDIVFLIIFVCLFVWGIITFFNL.

The next 3 membrane-spanning stretches (helical) occupy residues 36 to 56 (LAIM…DKMI), 58 to 78 (FIFV…KLLF), and 88 to 108 (IVFL…FFNL).

It is found in the cell membrane. This is an uncharacterized protein from Alkalihalophilus pseudofirmus (strain ATCC BAA-2126 / JCM 17055 / OF4) (Bacillus pseudofirmus).